Consider the following 89-residue polypeptide: Large ribosomal subunit protein bL27 (89 aa).

The disordered stretch occupies residues 1–22 (MAHTKKGGSSRNGRDSESKRLG).

Belongs to the bacterial ribosomal protein bL27 family.

This chain is Large ribosomal subunit protein bL27, found in Brucella melitensis biotype 1 (strain ATCC 23456 / CCUG 17765 / NCTC 10094 / 16M).